Consider the following 288-residue polypeptide: tRNA pseudouridine synthase B (288 aa).

The active-site Nucleophile is the Asp38.

This sequence belongs to the pseudouridine synthase TruB family. Type 1 subfamily.

It catalyses the reaction uridine(55) in tRNA = pseudouridine(55) in tRNA. Functionally, responsible for synthesis of pseudouridine from uracil-55 in the psi GC loop of transfer RNAs. The protein is tRNA pseudouridine synthase B of Carboxydothermus hydrogenoformans (strain ATCC BAA-161 / DSM 6008 / Z-2901).